Reading from the N-terminus, the 327-residue chain is Inactive peptidyl-prolyl cis-trans isomerase FKBP6 (327 aa).

Residues 1–20 (MSVFSRLRNGIPPSRDDCQS) are disordered. The 90-residue stretch at 54–143 (DASVLVKYSG…LFEIELIDFL (90 aa)) folds into the PPIase FKBP-type domain. TPR repeat units lie at residues 171 to 204 (AATE…LHRR), 219 to 252 (LLVL…DKRN), and 253 to 286 (AKAL…QPCN).

Belongs to the FKBP6 family. As to quaternary structure, interacts with HSP72/HSPA2 and CLTC. Interacts with GAPDH; leading to inhibit GAPDH catalytic activity. Interacts (via TPR repeats) with HSP90.

It localises to the cytoplasm. The protein localises to the cytosol. It is found in the nucleus. Its subcellular location is the chromosome. Co-chaperone required during spermatogenesis to repress transposable elements and prevent their mobilization, which is essential for the germline integrity. Acts via the piRNA metabolic process, which mediates the repression of transposable elements during meiosis by forming complexes composed of piRNAs and Piwi proteins and govern the methylation and subsequent repression of transposons. Acts as a co-chaperone via its interaction with HSP90 and is required for the piRNA amplification process, the secondary piRNA biogenesis. May be required together with HSP90 in removal of 16 nucleotide ping-pong by-products from Piwi complexes, possibly facilitating turnover of Piwi complexes. In Rattus norvegicus (Rat), this protein is Inactive peptidyl-prolyl cis-trans isomerase FKBP6 (Fkbp6).